A 91-amino-acid chain; its full sequence is C-C motif chemokine 5 (91 aa).

Residues 1–23 form the signal peptide; sequence MKVSAARLAVILVATALCAPASA. Disulfide bonds link Cys33-Cys57 and Cys34-Cys73.

The protein belongs to the intercrine beta (chemokine CC) family.

It is found in the secreted. Its function is as follows. Chemoattractant for blood monocytes, memory T-helper cells and eosinophils. Causes the release of histamine from basophils and activates eosinophils. May activate several chemokine receptors including CCR1, CCR3, CCR4 and CCR5. May also be an agonist of the G protein-coupled receptor GPR75. Together with GPR75, may play a role in neuron survival through activation of a downstream signaling pathway involving the PI3, Akt and MAP kinases. By activating GPR75 may also play a role in insulin secretion by islet cells. This chain is C-C motif chemokine 5 (CCL5), found in Macaca mulatta (Rhesus macaque).